The primary structure comprises 338 residues: Ketol-acid reductoisomerase (NADP(+)) (338 aa).

The KARI N-terminal Rossmann domain maps to 1–181; it reads MTVYYDKDCN…GGGRTAIIET (181 aa). NADP(+)-binding positions include 24–27, R47, S52, and 82–85; these read FGSQ and DENQ. The active site involves H107. Residue G133 coordinates NADP(+). The 146-residue stretch at 182 to 327 folds into the KARI C-terminal knotted domain; that stretch reads TFKDETETDL…VKLRTMMPWI (146 aa). 4 residues coordinate Mg(2+): D190, E194, E226, and E230. A substrate-binding site is contributed by S251.

Belongs to the ketol-acid reductoisomerase family. It depends on Mg(2+) as a cofactor.

The enzyme catalyses (2R)-2,3-dihydroxy-3-methylbutanoate + NADP(+) = (2S)-2-acetolactate + NADPH + H(+). The catalysed reaction is (2R,3R)-2,3-dihydroxy-3-methylpentanoate + NADP(+) = (S)-2-ethyl-2-hydroxy-3-oxobutanoate + NADPH + H(+). Its pathway is amino-acid biosynthesis; L-isoleucine biosynthesis; L-isoleucine from 2-oxobutanoate: step 2/4. It participates in amino-acid biosynthesis; L-valine biosynthesis; L-valine from pyruvate: step 2/4. Functionally, involved in the biosynthesis of branched-chain amino acids (BCAA). Catalyzes an alkyl-migration followed by a ketol-acid reduction of (S)-2-acetolactate (S2AL) to yield (R)-2,3-dihydroxy-isovalerate. In the isomerase reaction, S2AL is rearranged via a Mg-dependent methyl migration to produce 3-hydroxy-3-methyl-2-ketobutyrate (HMKB). In the reductase reaction, this 2-ketoacid undergoes a metal-dependent reduction by NADPH to yield (R)-2,3-dihydroxy-isovalerate. The chain is Ketol-acid reductoisomerase (NADP(+)) from Sulfurimonas denitrificans (strain ATCC 33889 / DSM 1251) (Thiomicrospira denitrificans (strain ATCC 33889 / DSM 1251)).